The following is a 511-amino-acid chain: Glutamyl-tRNA(Gln) amidotransferase subunit A, mitochondrial (511 aa).

Residues Lys72 and Ser149 each act as charge relay system in the active site. Ser173 (acyl-ester intermediate) is an active-site residue.

The protein belongs to the amidase family. GatA subfamily. Subunit of the heterotrimeric GatCAB amidotransferase (AdT) complex, composed of A, B and C subunits.

Its subcellular location is the mitochondrion. The enzyme catalyses L-glutamyl-tRNA(Gln) + L-glutamine + ATP + H2O = L-glutaminyl-tRNA(Gln) + L-glutamate + ADP + phosphate + H(+). Its function is as follows. Allows the formation of correctly charged Gln-tRNA(Gln) through the transamidation of misacylated Glu-tRNA(Gln) in the mitochondria. The reaction takes place in the presence of glutamine and ATP through an activated gamma-phospho-Glu-tRNA(Gln). This chain is Glutamyl-tRNA(Gln) amidotransferase subunit A, mitochondrial, found in Fusarium vanettenii (strain ATCC MYA-4622 / CBS 123669 / FGSC 9596 / NRRL 45880 / 77-13-4) (Fusarium solani subsp. pisi).